The sequence spans 184 residues: Outer-membrane lipoprotein carrier protein (184 aa).

Positions 1-19 are cleaved as a signal peptide; it reads MKAFLKILMVLIFVSVAYA.

It belongs to the LolA family. As to quaternary structure, monomer.

It localises to the periplasm. Functionally, participates in the translocation of lipoproteins from the inner membrane to the outer membrane. Only forms a complex with a lipoprotein if the residue after the N-terminal Cys is not an aspartate (The Asp acts as a targeting signal to indicate that the lipoprotein should stay in the inner membrane). The polypeptide is Outer-membrane lipoprotein carrier protein (Helicobacter pylori (strain P12)).